The primary structure comprises 205 residues: tRNA (pseudouridine(54)-N(1))-methyltransferase (205 aa).

Residues Leu-136, Gly-156, 179–184 (LSPLEL), and Cys-189 each bind S-adenosyl-L-methionine.

The protein belongs to the methyltransferase superfamily. TrmY family. Homodimer.

The protein resides in the cytoplasm. The catalysed reaction is pseudouridine(54) in tRNA + S-adenosyl-L-methionine = N(1)-methylpseudouridine(54) in tRNA + S-adenosyl-L-homocysteine + H(+). Its function is as follows. Specifically catalyzes the N1-methylation of pseudouridine at position 54 (Psi54) in tRNAs. In Methanocaldococcus jannaschii (strain ATCC 43067 / DSM 2661 / JAL-1 / JCM 10045 / NBRC 100440) (Methanococcus jannaschii), this protein is tRNA (pseudouridine(54)-N(1))-methyltransferase.